Here is a 468-residue protein sequence, read N- to C-terminus: Adenosylhomocysteinase (468 aa).

Positions 57, 132, and 194 each coordinate substrate. 195–197 contributes to the NAD(+) binding site; it reads TTT. Residues Lys224 and Asp228 each contribute to the substrate site. NAD(+) contacts are provided by residues Asn229, 258–263, Glu281, Asn316, 337–339, and Asn382; these read GFGDVG and IGH.

This sequence belongs to the adenosylhomocysteinase family. NAD(+) serves as cofactor.

It localises to the cytoplasm. The enzyme catalyses S-adenosyl-L-homocysteine + H2O = L-homocysteine + adenosine. It functions in the pathway amino-acid biosynthesis; L-homocysteine biosynthesis; L-homocysteine from S-adenosyl-L-homocysteine: step 1/1. Its function is as follows. May play a key role in the regulation of the intracellular concentration of adenosylhomocysteine. In Methylobacterium sp. (strain 4-46), this protein is Adenosylhomocysteinase.